A 143-amino-acid polypeptide reads, in one-letter code: Transcriptional regulator MraZ (143 aa).

2 consecutive SpoVT-AbrB domains span residues 5–47 (EYEH…TLEE) and 76–119 (AVEV…DRAS).

The protein belongs to the MraZ family. Forms oligomers.

It localises to the cytoplasm. Its subcellular location is the nucleoid. The sequence is that of Transcriptional regulator MraZ from Staphylococcus carnosus (strain TM300).